The sequence spans 100 residues: Integration host factor subunit alpha (100 aa).

The tract at residues 53 to 72 (FDLRDKKQRPGRNPKTGEEI) is disordered.

This sequence belongs to the bacterial histone-like protein family. Heterodimer of an alpha and a beta chain.

This protein is one of the two subunits of integration host factor, a specific DNA-binding protein that functions in genetic recombination as well as in transcriptional and translational control. This is Integration host factor subunit alpha from Marinobacter nauticus (strain ATCC 700491 / DSM 11845 / VT8) (Marinobacter aquaeolei).